A 315-amino-acid polypeptide reads, in one-letter code: Methionyl-tRNA formyltransferase (315 aa).

Residue 113 to 116 (SLLP) coordinates (6S)-5,6,7,8-tetrahydrofolate.

The protein belongs to the Fmt family.

It catalyses the reaction L-methionyl-tRNA(fMet) + (6R)-10-formyltetrahydrofolate = N-formyl-L-methionyl-tRNA(fMet) + (6S)-5,6,7,8-tetrahydrofolate + H(+). In terms of biological role, attaches a formyl group to the free amino group of methionyl-tRNA(fMet). The formyl group appears to play a dual role in the initiator identity of N-formylmethionyl-tRNA by promoting its recognition by IF2 and preventing the misappropriation of this tRNA by the elongation apparatus. The sequence is that of Methionyl-tRNA formyltransferase from Enterobacter sp. (strain 638).